Consider the following 228-residue polypeptide: MNTLFSPPSPPDNEQQLFECAQLLAGLSMGELAAKANLPIPPNLKRDKGWVGMLLEYYLGASAGSKPEQDFEHIGIELKTIPVDRRGYPLETTFVCVAPLTGNSGITWGSCHVRRKLSRVLWIPVEGEREIPLAKRRVGSPLLWSPNQEEEELLRRDWEELMDFIVLGKVESVTARHGEVLQLRPKAANSKALTEAIGVHGQPIMTLPRGFYLRKNFTAPLLARHFLI.

It belongs to the MutH family.

It is found in the cytoplasm. Its function is as follows. Sequence-specific endonuclease that cleaves unmethylated GATC sequences. It is involved in DNA mismatch repair. This Photorhabdus laumondii subsp. laumondii (strain DSM 15139 / CIP 105565 / TT01) (Photorhabdus luminescens subsp. laumondii) protein is DNA mismatch repair protein MutH.